The following is a 231-amino-acid chain: ATP phosphoribosyltransferase (231 aa).

It belongs to the ATP phosphoribosyltransferase family. Short subfamily. Heteromultimer composed of HisG and HisZ subunits.

The protein localises to the cytoplasm. It carries out the reaction 1-(5-phospho-beta-D-ribosyl)-ATP + diphosphate = 5-phospho-alpha-D-ribose 1-diphosphate + ATP. Its pathway is amino-acid biosynthesis; L-histidine biosynthesis; L-histidine from 5-phospho-alpha-D-ribose 1-diphosphate: step 1/9. In terms of biological role, catalyzes the condensation of ATP and 5-phosphoribose 1-diphosphate to form N'-(5'-phosphoribosyl)-ATP (PR-ATP). Has a crucial role in the pathway because the rate of histidine biosynthesis seems to be controlled primarily by regulation of HisG enzymatic activity. This Brucella ovis (strain ATCC 25840 / 63/290 / NCTC 10512) protein is ATP phosphoribosyltransferase.